The sequence spans 378 residues: 3-dehydroquinate synthase (378 aa).

Residues 115–119, 139–140, lysine 152, and lysine 161 each bind NAD(+); these read GVVGD and TS. Glutamate 194, histidine 256, and histidine 275 together coordinate Zn(2+).

This sequence belongs to the sugar phosphate cyclases superfamily. Dehydroquinate synthase family. Co(2+) serves as cofactor. Requires Zn(2+) as cofactor. The cofactor is NAD(+).

The protein localises to the cytoplasm. It carries out the reaction 7-phospho-2-dehydro-3-deoxy-D-arabino-heptonate = 3-dehydroquinate + phosphate. It functions in the pathway metabolic intermediate biosynthesis; chorismate biosynthesis; chorismate from D-erythrose 4-phosphate and phosphoenolpyruvate: step 2/7. Its function is as follows. Catalyzes the conversion of 3-deoxy-D-arabino-heptulosonate 7-phosphate (DAHP) to dehydroquinate (DHQ). This Brucella canis (strain ATCC 23365 / NCTC 10854 / RM-666) protein is 3-dehydroquinate synthase.